Reading from the N-terminus, the 131-residue chain is Protein E11 homolog (131 aa).

Belongs to the chordopoxvirinae E11 family.

The protein resides in the virion. This Fowlpox virus (strain NVSL) (FPV) protein is Protein E11 homolog.